Reading from the N-terminus, the 101-residue chain is ATP-dependent Clp protease adapter protein ClpS (101 aa).

Belongs to the ClpS family. In terms of assembly, binds to the N-terminal domain of the chaperone ClpA.

Functionally, involved in the modulation of the specificity of the ClpAP-mediated ATP-dependent protein degradation. The polypeptide is ATP-dependent Clp protease adapter protein ClpS (Mycobacterium bovis (strain ATCC BAA-935 / AF2122/97)).